A 97-amino-acid polypeptide reads, in one-letter code: Exodeoxyribonuclease 7 small subunit (97 aa).

The segment at Met1–Asn22 is disordered.

This sequence belongs to the XseB family. Heterooligomer composed of large and small subunits.

The protein localises to the cytoplasm. It catalyses the reaction Exonucleolytic cleavage in either 5'- to 3'- or 3'- to 5'-direction to yield nucleoside 5'-phosphates.. In terms of biological role, bidirectionally degrades single-stranded DNA into large acid-insoluble oligonucleotides, which are then degraded further into small acid-soluble oligonucleotides. This Burkholderia cenocepacia (strain HI2424) protein is Exodeoxyribonuclease 7 small subunit.